The primary structure comprises 83 residues: Mu-theraphotoxin-Hhn2e (83 aa).

A signal peptide spans 1-21; that stretch reads MKASMFLALAGLVLLFVVGYA. A propeptide spanning residues 22–48 is cleaved from the precursor; it reads SESEEKEFPRELLSKIFAVDDFKGEER. Disulfide bonds link Cys50-Cys65, Cys57-Cys70, and Cys64-Cys77. A Leucine amide modification is found at Leu81.

This sequence belongs to the neurotoxin 10 (Hwtx-1) family. 15 (Hntx-3) subfamily. In terms of assembly, monomer. As to expression, expressed by the venom gland.

It localises to the secreted. Functionally, lethal neurotoxin. Selectively blocks tetrodotoxin-sensitive voltage-gated sodium channels (Nav). Does not affect tetrodotoxin-resistant voltage-gated sodium channels or calcium channels. The sequence is that of Mu-theraphotoxin-Hhn2e from Cyriopagopus hainanus (Chinese bird spider).